A 336-amino-acid polypeptide reads, in one-letter code: Immune-associated nucleotide-binding protein 6 (336 aa).

The AIG1-type G domain occupies 33–241; the sequence is EPVKNVVLVG…FTDTMHRRIQ (209 aa). Positions 42-49 are G1; it reads GRTGNGKS. Residues 42-50 and Ser-63 each bind GTP; that span reads GRTGNGKSA. Positions 69-73 are G2; sequence GVTTR. The G3 stretch occupies residues 91-94; sequence DTPG. Residues 161–164 are G4; the sequence is TCGD. The interval 200-202 is G5; that stretch reads DNR. Asn-201 lines the GTP pocket. Residues 237-270 adopt a coiled-coil conformation; that stretch reads HRRIQEEAARVKREEKEIEEKNIADEEKAALKKQ.

This sequence belongs to the TRAFAC class TrmE-Era-EngA-EngB-Septin-like GTPase superfamily. AIG1/Toc34/Toc159-like paraseptin GTPase family. IAN subfamily. In terms of tissue distribution, mostly expressed in pollen. Also detected in lateral roots and radicles.

This Arabidopsis thaliana (Mouse-ear cress) protein is Immune-associated nucleotide-binding protein 6.